We begin with the raw amino-acid sequence, 254 residues long: NAD-dependent protein deacylase (254 aa).

Positions methionine 1–glutamate 250 constitute a Deacetylase sirtuin-type domain. NAD(+) is bound at residue glycine 22–tryptophan 41. Substrate contacts are provided by tyrosine 66 and arginine 69. Glutamine 104–aspartate 107 provides a ligand contact to NAD(+). The active-site Proton acceptor is histidine 122. Residues cysteine 130, cysteine 133, cysteine 149, and cysteine 152 each contribute to the Zn(2+) site. Residues glycine 189–serine 191, asparagine 215–glutamate 217, and alanine 233 each bind NAD(+).

Belongs to the sirtuin family. Class III subfamily. Requires Zn(2+) as cofactor.

The protein localises to the cytoplasm. It carries out the reaction N(6)-acetyl-L-lysyl-[protein] + NAD(+) + H2O = 2''-O-acetyl-ADP-D-ribose + nicotinamide + L-lysyl-[protein]. The catalysed reaction is N(6)-succinyl-L-lysyl-[protein] + NAD(+) + H2O = 2''-O-succinyl-ADP-D-ribose + nicotinamide + L-lysyl-[protein]. NAD-dependent lysine deacetylase and desuccinylase that specifically removes acetyl and succinyl groups on target proteins. Modulates the activities of several proteins which are inactive in their acylated form. The polypeptide is NAD-dependent protein deacylase (Thermus thermophilus (strain ATCC 27634 / DSM 579 / HB8)).